Here is an 816-residue protein sequence, read N- to C-terminus: MAVSLDDDVPLILTLDEGGSAPLAPSNGLGQEELPSKNGGSYAIHDSQAPSLSSGGESSPSSPAHNWEMNYQEAAIYLQEGENNDKFFTHPKDAKALAAYLFAHNHLFYLMELATALLLLLLSLCEAPAVPALRLGIYVHATLELFALMVVVFELCMKLRWLGLHTFIRHKRTMVKTSVLVVQFVEAIVVLVRQMSHVRVTRALRCIFLVDCRYCGGVRRNLRQIFQSLPPFMDILLLLLFFMIIFAILGFYLFSPNPSDPYFSTLENSIVSLFVLLTTANFPDVMMPSYSRNPWSCVFFIVYLSIELYFIMNLLLAVVFDTFNDIEKRKFKSLLLHKRTAIQHAYRLLISQRRPAGISYRQFEGLMRFYKPRMSARERYLTFKALNQNNTPLLSLKDFYDIYEVAALKWKAKKNREHWFDELPRTALLIFKGINILVKSKAFQYFMYLVVAVNGVWILVETFMLKGGNFFSKHVPWSYLVFLTIYGVELFLKVAGLGPVEYLSSGWNLFDFSVTVFAFLGLLALALNMEPFYFIVVLRPLQLLRLFKLKERYRNVLDTMFELLPRMASLGLTLLIFYYSFAIVGMEFFCGIVFPNCCNTSTVADAYRWRNHTVGNRTVVEEGYYYLNNFDNILNSFVTLFELTVVNNWYIIMEGVTSQTSHWSRLYFMTFYIVTMVVMTIIVAFILEAFVFRMNYSRKNQDSEVDGGITLEKEISKEELVAVLELYREARGASSDVTRLLETLSQMERYQQHSMVFLGRRSRTKSDLSLKMYQEEIQEWYEEHAREQEQQRQLSSSAAPAAQQPPGSRQRSQTVT.

The Cytoplasmic segment spans residues 1-112 (MAVSLDDDVP…AHNHLFYLME (112 aa)). The disordered stretch occupies residues 17 to 64 (EGGSAPLAPSNGLGQEELPSKNGGSYAIHDSQAPSLSSGGESSPSSPA). Positions 50–63 (PSLSSGGESSPSSP) are enriched in low complexity. A helical transmembrane segment spans residues 113–133 (LATALLLLLLSLCEAPAVPAL). A topological domain (extracellular) is located at residue Arg-134. Residues 135–155 (LGIYVHATLELFALMVVVFEL) form a helical membrane-spanning segment. At 156–177 (CMKLRWLGLHTFIRHKRTMVKT) the chain is on the cytoplasmic side. A helical membrane pass occupies residues 178–198 (SVLVVQFVEAIVVLVRQMSHV). Residues 199 to 200 (RV) are Extracellular-facing. Residues 201–220 (TRALRCIFLVDCRYCGGVRR) traverse the membrane as a helical segment. Over 221–234 (NLRQIFQSLPPFMD) the chain is Cytoplasmic. The chain crosses the membrane as a helical span at residues 235-255 (ILLLLLFFMIIFAILGFYLFS). Topologically, residues 256–262 (PNPSDPY) are extracellular. An intramembrane region (helical; Pore-forming) is located at residues 263–286 (FSTLENSIVSLFVLLTTANFPDVM). Over 287-294 (MPSYSRNP) the chain is Extracellular. The chain crosses the membrane as a helical span at residues 295–315 (WSCVFFIVYLSIELYFIMNLL). Topologically, residues 316-444 (LAVVFDTFND…NILVKSKAFQ (129 aa)) are cytoplasmic. A helical transmembrane segment spans residues 445 to 465 (YFMYLVVAVNGVWILVETFML). Topologically, residues 466–479 (KGGNFFSKHVPWSY) are extracellular. A helical transmembrane segment spans residues 480-500 (LVFLTIYGVELFLKVAGLGPV). Residues 501–503 (EYL) are Cytoplasmic-facing. The chain crosses the membrane as a helical span at residues 504 to 526 (SSGWNLFDFSVTVFAFLGLLALA). Residues 527-534 (LNMEPFYF) are Extracellular-facing. The chain crosses the membrane as a helical span at residues 535-549 (IVVLRPLQLLRLFKL). Residues 550 to 573 (KERYRNVLDTMFELLPRMASLGLT) lie on the Cytoplasmic side of the membrane. A helical membrane pass occupies residues 574–594 (LLIFYYSFAIVGMEFFCGIVF). The Extracellular segment spans residues 595 to 629 (PNCCNTSTVADAYRWRNHTVGNRTVVEEGYYYLNN). 3 N-linked (GlcNAc...) asparagine glycosylation sites follow: Asn-599, Asn-611, and Asn-616. The helical; Pore-forming intramembrane region spans 630–653 (FDNILNSFVTLFELTVVNNWYIIM). The Extracellular segment spans residues 654–670 (EGVTSQTSHWSRLYFMT). A helical transmembrane segment spans residues 671 to 691 (FYIVTMVVMTIIVAFILEAFV). Residues 692 to 816 (FRMNYSRKNQ…GSRQRSQTVT (125 aa)) are Cytoplasmic-facing. The stretch at 769 to 796 (SLKMYQEEIQEWYEEHAREQEQQRQLSS) forms a coiled coil. Residues 782–816 (EEHAREQEQQRQLSSSAAPAAQQPPGSRQRSQTVT) are disordered. The span at 791 to 816 (QRQLSSSAAPAAQQPPGSRQRSQTVT) shows a compositional bias: low complexity.

It belongs to the calcium channel alpha-1 subunit (TC 1.A.1.11) family. Two pore calcium channel subfamily. In terms of assembly, dimer. Interacts with MTOR; the interaction is required for TPCN1 ATP sensitivity. Interacts with STX7, STX8 and STX12. Interacts with JPT2. Found in a complex with LSM12, TPCN1 and TPCN2. In terms of processing, N-glycosylated. As to expression, highest expression found in the heart and kidney, and lowest expression found in the spleen.

It is found in the lysosome membrane. The protein resides in the endosome membrane. It localises to the early endosome membrane. The protein localises to the recycling endosome membrane. The catalysed reaction is Na(+)(in) = Na(+)(out). It carries out the reaction Ca(2+)(in) = Ca(2+)(out). Its activity is regulated as follows. Na(+) current is inhibited by ATP in a MTORC-dependent manner. ATP sensitivity is independent of PI(3,5)P2. Probably regulated by Mg(2+) ions, cytosolic Mg(2+) selectively inhibits outward current while lysosomal Mg(2+) modestly inhibits both the outward and inward currents. In the absence of Mg(2+), NAADP readily activates TPCN2, with properties similar to PI(3,5)P2. Both current elicited by PI(3,5)P2 as well as NAADP are inhibited by tetrandrine. Functionally, intracellular channel initially characterized as a non-selective Ca(2+)-permeable channel activated by NAADP (nicotinic acid adenine dinucleotide phosphate), it is also a voltage-gated highly-selective Na(+) channel activated directly by PI(3,5)P2 (phosphatidylinositol 3,5-bisphosphate) that senses pH changes and confers electrical excitability to organelles. Localizes to the early and recycling endosomes membranes where it plays a role in the uptake and processing of proteins and regulates organellar membrane excitability, membrane trafficking and pH homeostasis. Ion selectivity is not fixed but rather agonist-dependent and under defined ionic conditions, can be readily activated by both NAADP and PI(3,5)P2. Required for mTOR-dependent nutrient sensing. (Microbial infection) During Ebola virus (EBOV) infection, controls the movement of endosomes containing virus particles and is required by EBOV to escape from the endosomal network into the cell cytoplasm. This is Two pore channel protein 1 from Homo sapiens (Human).